We begin with the raw amino-acid sequence, 287 residues long: MKFGKSLSNQIEETLPEWRDKFLSYKELKKKLKLMEPRSVENRPNKRSRSDSNSVDTDPTVGMTKEELDFISLLEDELEKFNSFFVEQEEEYIIRLKELKDQVAKAKNSNEEMINIKKEIVDFHGEMVLLMNYSALNYTGLAKILKKYDKRTGALIRLPFIQKVLQEPFFTTDLLNTFVKECEAMLDRLFPSNKSRNLDEEGEPTTSGMVKTGTDDSELLRVPKELSEIEYMESLYMKSTVSALKVLKEIRSGSSTVSVFSLPPLPASGLEDDSWKKKVGVLEQVAK.

Positions 1-162 (MKFGKSLSNQ…GALIRLPFIQ (162 aa)) constitute an SPX domain. Over residues 36–50 (EPRSVENRPNKRSRS) the composition is skewed to basic and acidic residues. Disordered stretches follow at residues 36 to 61 (EPRS…DPTV) and 194 to 213 (KSRN…VKTG).

The protein localises to the nucleus. May inhibit PHR1 DNA-binding activity in a Pi-dependent manner. This Arabidopsis thaliana (Mouse-ear cress) protein is SPX domain-containing protein 2.